A 321-amino-acid chain; its full sequence is Glycerol-3-phosphate dehydrogenase [NAD(P)+] (321 aa).

3 residues coordinate NADPH: Trp15, Arg35, and Lys101. Sn-glycerol 3-phosphate contacts are provided by Lys101 and Gly129. Ala133 lines the NADPH pocket. Residues Lys184, Asp237, Ser247, Arg248, and Asn249 each coordinate sn-glycerol 3-phosphate. Lys184 acts as the Proton acceptor in catalysis. Arg248 is an NADPH binding site. 2 residues coordinate NADPH: Val268 and Glu270.

Belongs to the NAD-dependent glycerol-3-phosphate dehydrogenase family.

It localises to the cytoplasm. It catalyses the reaction sn-glycerol 3-phosphate + NAD(+) = dihydroxyacetone phosphate + NADH + H(+). The enzyme catalyses sn-glycerol 3-phosphate + NADP(+) = dihydroxyacetone phosphate + NADPH + H(+). The protein operates within membrane lipid metabolism; glycerophospholipid metabolism. Catalyzes the reduction of the glycolytic intermediate dihydroxyacetone phosphate (DHAP) to sn-glycerol 3-phosphate (G3P), the key precursor for phospholipid synthesis. This Acidiphilium cryptum (strain JF-5) protein is Glycerol-3-phosphate dehydrogenase [NAD(P)+].